The primary structure comprises 888 residues: Alanine--tRNA ligase (888 aa).

Positions 573, 577, 676, and 680 each coordinate Zn(2+).

This sequence belongs to the class-II aminoacyl-tRNA synthetase family. Requires Zn(2+) as cofactor.

The protein resides in the cytoplasm. It catalyses the reaction tRNA(Ala) + L-alanine + ATP = L-alanyl-tRNA(Ala) + AMP + diphosphate. In terms of biological role, catalyzes the attachment of alanine to tRNA(Ala) in a two-step reaction: alanine is first activated by ATP to form Ala-AMP and then transferred to the acceptor end of tRNA(Ala). Also edits incorrectly charged Ser-tRNA(Ala) and Gly-tRNA(Ala) via its editing domain. This Corynebacterium glutamicum (strain ATCC 13032 / DSM 20300 / JCM 1318 / BCRC 11384 / CCUG 27702 / LMG 3730 / NBRC 12168 / NCIMB 10025 / NRRL B-2784 / 534) protein is Alanine--tRNA ligase.